We begin with the raw amino-acid sequence, 430 residues long: MTAPLKAVEGSVDLPALMLQLGRQARSAARVLAIAPTAQKNLALAAMERAIRVNAAAILAANAEDVAEVKASGASSAFIDRLTLTPARIAAMADGIKVIHDIADPVGAVTERWQRPNGMTIERVRVPLGVIGVIFESRPNVTADAGVLGLKSGNAVMLRGGSDSFRSCRAIHDCLVQGLREADLPEAAITLVPVRDRAAVGLMLSGLNGNVDVIVPRGGKSLVARVEAEARVPVFAHLEGVNHVYVDRGADLAMAKAIVLNAKMRRPGVCGAAETLLVDRAAAEADLAPLLSVLIESGCEVRGDAEMQRVDTRVKPVAEEDWSTEYGEPIIAAKVVDGLDGALLHIARYGSHHTEAIVTQDEAAAARFLNEVDAAIVLHNASTQFADGGEFGFGAEIGIATGKFHARGPVGAEQLTSFKYRVHGTGQTRP.

It belongs to the gamma-glutamyl phosphate reductase family.

It is found in the cytoplasm. The catalysed reaction is L-glutamate 5-semialdehyde + phosphate + NADP(+) = L-glutamyl 5-phosphate + NADPH + H(+). The protein operates within amino-acid biosynthesis; L-proline biosynthesis; L-glutamate 5-semialdehyde from L-glutamate: step 2/2. Functionally, catalyzes the NADPH-dependent reduction of L-glutamate 5-phosphate into L-glutamate 5-semialdehyde and phosphate. The product spontaneously undergoes cyclization to form 1-pyrroline-5-carboxylate. The protein is Gamma-glutamyl phosphate reductase of Rhodopseudomonas palustris (strain BisA53).